Here is a 48-residue protein sequence, read N- to C-terminus: Large ribosomal subunit protein bL33A (48 aa).

Belongs to the bacterial ribosomal protein bL33 family.

This is Large ribosomal subunit protein bL33A from Exiguobacterium sibiricum (strain DSM 17290 / CCUG 55495 / CIP 109462 / JCM 13490 / 255-15).